Reading from the N-terminus, the 673-residue chain is ATP-dependent DNA helicase Rep (673 aa).

The UvrD-like helicase ATP-binding domain maps to 1-280 (MRLNPGQQQA…IKLEQNYRSS (280 aa)). ATP contacts are provided by residues 22–29 (AGAGSGKT) and R278. The region spanning 281-562 (GRILKAANIL…QLMTLHASKG (282 aa)) is the UvrD-like helicase C-terminal domain.

The protein belongs to the helicase family. UvrD subfamily. Homodimer in association with DNA.

It catalyses the reaction Couples ATP hydrolysis with the unwinding of duplex DNA by translocating in the 3'-5' direction.. The enzyme catalyses ATP + H2O = ADP + phosphate + H(+). With respect to regulation, binding to DNA induces dimerization, which is required for DNA helicase activity. Helicase activity is stimulated by PriC. Rep helicase is a single-stranded (ss)DNA-dependent ATPase involved in DNA replication; it can initiate unwinding at a nick in the DNA. It binds to ssDNA and acts in a progressive fashion along the DNA in the 3' to 5' direction. Binds double-stranded (ds)DNA with a 5' ss- but not 3' ss-extension and forked structures with either lagging or leading ssDNA. Part of the PriC-Rep pathway for restart of stalled replication forks, which reloads the DnaB replicative helicase on sites other than the origin of replication. In Escherichia coli (strain K12), this protein is ATP-dependent DNA helicase Rep.